The following is a 176-amino-acid chain: RNA pyrophosphohydrolase (176 aa).

Residues 6 to 149 form the Nudix hydrolase domain; that stretch reads GYRPNVGIVI…KRDVYRRVMK (144 aa). The Nudix box motif lies at 38–59; it reads GGINPGESAEQAMYRELFEEVG.

The protein belongs to the Nudix hydrolase family. RppH subfamily. It depends on a divalent metal cation as a cofactor.

In terms of biological role, accelerates the degradation of transcripts by removing pyrophosphate from the 5'-end of triphosphorylated RNA, leading to a more labile monophosphorylated state that can stimulate subsequent ribonuclease cleavage. The polypeptide is RNA pyrophosphohydrolase (Shigella dysenteriae serotype 1 (strain Sd197)).